We begin with the raw amino-acid sequence, 154 residues long: Myoglobin (154 aa).

The Globin domain maps to 2-148 (GLSDQEWQQV…FRNDMASKYK (147 aa)). His65 provides a ligand contact to nitrite. Residue His65 coordinates O2. His94 is a binding site for heme b.

Belongs to the globin family. As to quaternary structure, monomeric.

The protein localises to the cytoplasm. It localises to the sarcoplasm. It catalyses the reaction Fe(III)-heme b-[protein] + nitric oxide + H2O = Fe(II)-heme b-[protein] + nitrite + 2 H(+). The catalysed reaction is H2O2 + AH2 = A + 2 H2O. In terms of biological role, monomeric heme protein which primary function is to store oxygen and facilitate its diffusion within muscle tissues. Reversibly binds oxygen through a pentacoordinated heme iron and enables its timely and efficient release as needed during periods of heightened demand. Depending on the oxidative conditions of tissues and cells, and in addition to its ability to bind oxygen, it also has a nitrite reductase activity whereby it regulates the production of bioactive nitric oxide. Under stress conditions, like hypoxia and anoxia, it also protects cells against reactive oxygen species thanks to its pseudoperoxidase activity. The protein is Myoglobin (MB) of Gallus gallus (Chicken).